Reading from the N-terminus, the 256-residue chain is Histone H1 (256 aa).

Composition is skewed to low complexity over residues 1–19 and 27–43; these read MSDS…PPAT and KKAS…ASAT. Disordered stretches follow at residues 1–53 and 108–256; these read MSDS…QQMV and GKGA…AAKK. Residue Ser11 is modified to Phosphoserine. Residues 45–119 form the H15 domain; that stretch reads SHPPTQQMVD…GASGSFKLSA (75 aa). 2 stretches are compositionally biased toward basic and acidic residues: residues 121 to 140 and 176 to 193; these read AKKE…EKKV and KTAE…DAKK. The segment covering 194–229 has biased composition (low complexity); it reads TGIIKSKPAATKAKVTAAKPKAVVAKASKAKPAVSA. Residues 245 to 256 show a composition bias toward basic residues; that stretch reads KKPKAKTTAAKK.

The protein belongs to the histone H1/H5 family. Post-translationally, phosphorylated in oocytes during prophase I of meiosis.

The protein resides in the nucleus. The protein localises to the chromosome. Its function is as follows. Histones H1 are necessary for the condensation of nucleosome chains into higher-order structures. This chain is Histone H1 (His1), found in Drosophila melanogaster (Fruit fly).